The primary structure comprises 151 residues: Small ribosomal subunit protein uS15z (151 aa).

Belongs to the universal ribosomal protein uS15 family.

This is Small ribosomal subunit protein uS15z (RPS13A) from Arabidopsis thaliana (Mouse-ear cress).